Here is a 122-residue protein sequence, read N- to C-terminus: UPF0102 protein Smed_3545 (122 aa).

This sequence belongs to the UPF0102 family.

The protein is UPF0102 protein Smed_3545 of Sinorhizobium medicae (strain WSM419) (Ensifer medicae).